The following is a 367-amino-acid chain: UDP-N-acetylglucosamine--N-acetylmuramyl-(pentapeptide) pyrophosphoryl-undecaprenol N-acetylglucosamine transferase (367 aa).

UDP-N-acetyl-alpha-D-glucosamine is bound by residues Thr15 to Gly17, Asn126, Arg169, Ser197, and Gln298.

The protein belongs to the glycosyltransferase 28 family. MurG subfamily.

Its subcellular location is the cell inner membrane. It catalyses the reaction di-trans,octa-cis-undecaprenyl diphospho-N-acetyl-alpha-D-muramoyl-L-alanyl-D-glutamyl-meso-2,6-diaminopimeloyl-D-alanyl-D-alanine + UDP-N-acetyl-alpha-D-glucosamine = di-trans,octa-cis-undecaprenyl diphospho-[N-acetyl-alpha-D-glucosaminyl-(1-&gt;4)]-N-acetyl-alpha-D-muramoyl-L-alanyl-D-glutamyl-meso-2,6-diaminopimeloyl-D-alanyl-D-alanine + UDP + H(+). Its pathway is cell wall biogenesis; peptidoglycan biosynthesis. In terms of biological role, cell wall formation. Catalyzes the transfer of a GlcNAc subunit on undecaprenyl-pyrophosphoryl-MurNAc-pentapeptide (lipid intermediate I) to form undecaprenyl-pyrophosphoryl-MurNAc-(pentapeptide)GlcNAc (lipid intermediate II). The sequence is that of UDP-N-acetylglucosamine--N-acetylmuramyl-(pentapeptide) pyrophosphoryl-undecaprenol N-acetylglucosamine transferase from Bradyrhizobium sp. (strain ORS 278).